A 304-amino-acid chain; its full sequence is Acetylglutamate kinase (304 aa).

Substrate is bound by residues 74–75, arginine 96, and asparagine 201; that span reads GG.

It belongs to the acetylglutamate kinase family. ArgB subfamily.

It is found in the cytoplasm. It catalyses the reaction N-acetyl-L-glutamate + ATP = N-acetyl-L-glutamyl 5-phosphate + ADP. Its pathway is amino-acid biosynthesis; L-arginine biosynthesis; N(2)-acetyl-L-ornithine from L-glutamate: step 2/4. Its function is as follows. Catalyzes the ATP-dependent phosphorylation of N-acetyl-L-glutamate. The chain is Acetylglutamate kinase from Alkalilimnicola ehrlichii (strain ATCC BAA-1101 / DSM 17681 / MLHE-1).